Reading from the N-terminus, the 425-residue chain is CinA-like protein (425 aa).

The protein belongs to the CinA family.

This Trichodesmium erythraeum (strain IMS101) protein is CinA-like protein.